Consider the following 75-residue polypeptide: Bacteriocin lactacin-F subunit LafA (75 aa).

Residues 1 to 18 (MKQFNYLSHKDLAVVVGG) constitute a propeptide that is removed on maturation.

This sequence belongs to the bacteriocin class IIB family. In terms of assembly, this bacteriocin depends upon the complementation of two peptides for activity: LafA and LafX. Associated with a 180 kDa bacteriocin complex.

Its function is as follows. Heat stable bacteriocin active against Enterococcus faecalis and other Lactobacilli. This Lactobacillus johnsonii (strain CNCM I-12250 / La1 / NCC 533) protein is Bacteriocin lactacin-F subunit LafA (lafA).